The primary structure comprises 104 residues: Large ribosomal subunit protein bL21 (104 aa).

It belongs to the bacterial ribosomal protein bL21 family. As to quaternary structure, part of the 50S ribosomal subunit. Contacts protein L20.

This protein binds to 23S rRNA in the presence of protein L20. The protein is Large ribosomal subunit protein bL21 of Streptococcus pneumoniae serotype 2 (strain D39 / NCTC 7466).